The primary structure comprises 135 residues: Holo-[acyl-carrier-protein] synthase (135 aa).

2 residues coordinate Mg(2+): D8 and E58.

The protein belongs to the P-Pant transferase superfamily. AcpS family. The cofactor is Mg(2+).

It localises to the cytoplasm. The catalysed reaction is apo-[ACP] + CoA = holo-[ACP] + adenosine 3',5'-bisphosphate + H(+). In terms of biological role, transfers the 4'-phosphopantetheine moiety from coenzyme A to a Ser of acyl-carrier-protein. The protein is Holo-[acyl-carrier-protein] synthase of Leuconostoc citreum (strain KM20).